Reading from the N-terminus, the 311-residue chain is Ribose-5-phosphate isomerase (311 aa).

Residues 22 to 32 (AGGAASGGGGN) show a composition bias toward gly residues. The tract at residues 22–67 (AGGAASGGGGNSWDLPGSHVRLPGRAQSGTRGGAGNTSTSCGDSNS) is disordered. An Omega-N-methylarginine modification is found at R52. Over residues 57–67 (NTSTSCGDSNS) the composition is skewed to polar residues. Residue S106 is modified to Phosphoserine.

Belongs to the ribose 5-phosphate isomerase family.

The enzyme catalyses aldehydo-D-ribose 5-phosphate = D-ribulose 5-phosphate. It participates in carbohydrate degradation; pentose phosphate pathway; D-ribose 5-phosphate from D-ribulose 5-phosphate (non-oxidative stage): step 1/1. In terms of biological role, catalyzes the reversible conversion of ribose-5-phosphate to ribulose 5-phosphate and participates in the first step of the non-oxidative branch of the pentose phosphate pathway. The protein is Ribose-5-phosphate isomerase of Homo sapiens (Human).